The sequence spans 445 residues: Argininosuccinate synthase (445 aa).

Residues 17–25 and A43 contribute to the ATP site; that span reads AFSGGLDTS. Y99 provides a ligand contact to L-citrulline. 2 residues coordinate ATP: G129 and T131. Residues T131, N135, and D136 each coordinate L-aspartate. N135 serves as a coordination point for L-citrulline. D136 provides a ligand contact to ATP. Residues R139 and S192 each coordinate L-citrulline. ATP is bound at residue D194. T201, E203, and E280 together coordinate L-citrulline.

Belongs to the argininosuccinate synthase family. Type 2 subfamily. Homotetramer.

The protein localises to the cytoplasm. It catalyses the reaction L-citrulline + L-aspartate + ATP = 2-(N(omega)-L-arginino)succinate + AMP + diphosphate + H(+). The protein operates within amino-acid biosynthesis; L-arginine biosynthesis; L-arginine from L-ornithine and carbamoyl phosphate: step 2/3. This is Argininosuccinate synthase from Burkholderia ambifaria (strain ATCC BAA-244 / DSM 16087 / CCUG 44356 / LMG 19182 / AMMD) (Burkholderia cepacia (strain AMMD)).